The sequence spans 691 residues: Elongation factor G (691 aa).

Positions 8 to 282 (ERVRNIGIAA…AVVDYLPAPV (275 aa)) constitute a tr-type G domain. GTP contacts are provided by residues 17–24 (AHIDAGKT), 81–85 (DTPGH), and 135–138 (NKMD).

This sequence belongs to the TRAFAC class translation factor GTPase superfamily. Classic translation factor GTPase family. EF-G/EF-2 subfamily.

The protein resides in the cytoplasm. Functionally, catalyzes the GTP-dependent ribosomal translocation step during translation elongation. During this step, the ribosome changes from the pre-translocational (PRE) to the post-translocational (POST) state as the newly formed A-site-bound peptidyl-tRNA and P-site-bound deacylated tRNA move to the P and E sites, respectively. Catalyzes the coordinated movement of the two tRNA molecules, the mRNA and conformational changes in the ribosome. In Prochlorococcus marinus (strain AS9601), this protein is Elongation factor G.